Here is a 623-residue protein sequence, read N- to C-terminus: Heterogeneous nuclear ribonucleoprotein L (623 aa).

Basic residues predominate over residues 1–16 (MSRRLLPRAEKRRRRL). The disordered stretch occupies residues 1–97 (MSRRLLPRAE…NYDDPHKTPA (97 aa)). Over residues 17 to 27 (EQRQQPDEQLR) the composition is skewed to basic and acidic residues. A compositionally biased stretch (low complexity) spans 28 to 37 (RAGAMVKMAA). Gly residues predominate over residues 38 to 54 (AGGGGGGGRYYGGGNEG). Residues Lys59 and Lys62 each participate in a glycyl lysine isopeptide (Lys-Gly) (interchain with G-Cter in SUMO2) cross-link. Gly residues predominate over residues 69 to 87 (QHGGGGGGGSGAAGGGGGE). Phosphoserine is present on Ser98. The 75-residue stretch at 99–173 (PVVHIRGLID…HPAFVNYSTS (75 aa)) folds into the RRM 1 domain. A Glycyl lysine isopeptide (Lys-Gly) (interchain with G-Cter in SUMO2) cross-link involves residue Lys133. Position 182 is a phosphoserine (Ser182). Residues 190-267 (SVLLFTILNP…CTLKIEYAKP (78 aa)) enclose the RRM 2 domain. N6-acetyllysine is present on Lys266. Residues 281–298 (DYTNPNLSGQGDPGSNPN) show a composition bias toward polar residues. A disordered region spans residues 281-413 (DYTNPNLSGQ…PPPPDYGPHA (133 aa)). Phosphoserine occurs at positions 288 and 295. Lys299 is covalently cross-linked (Glycyl lysine isopeptide (Lys-Gly) (interchain with G-Cter in SUMO2)). 2 positions are modified to asymmetric dimethylarginine: Arg388 and Arg392. The segment covering 398–409 (GHPPPPPPPPDY) has biased composition (pro residues). Position 415 is a phosphoserine (Ser415). RRM domains lie at 416–490 (PVLM…VSKQ) and 498–586 (SYGL…WDSK). Ser578 carries the post-translational modification Phosphoserine; by CaMK4. A Glycyl lysine isopeptide (Lys-Gly) (interchain with G-Cter in SUMO2) cross-link involves residue Lys602.

In terms of assembly, identified in a IGF2BP1-dependent mRNP granule complex containing untranslated mRNAs. Interacts with HNRNPLL. Interacts with APEX1; the interaction is DNA-dependent. Component of a complex with SETD2. Interacts with ELAVL1. Part of a transcription inhibitory ribonucleoprotein complex composed at least of the circular RNA circZNF827, ZNF827 and HNRNPK. Interacts with CHD8 in an RNA-dependent manner. Several isoelectric forms of the L protein are probably the results of post-translational modifications. In terms of processing, phosphorylation at Ser-578 by CaMK4 enhances interaction with a CaMK4-responsive RNA element (CaRRE1), and prevents inclusion of the stress axis-regulated exon (STREX) of the KCNMA1 potassium channel transcripts upon membrane depolarization.

It localises to the nucleus. Its subcellular location is the nucleoplasm. The protein localises to the cytoplasm. Splicing factor binding to exonic or intronic sites and acting as either an activator or repressor of exon inclusion. Exhibits a binding preference for CA-rich elements. Component of the heterogeneous nuclear ribonucleoprotein (hnRNP) complexes and associated with most nascent transcripts. Associates, together with APEX1, to the negative calcium responsive element (nCaRE) B2 of the APEX2 promoter. As part of a ribonucleoprotein complex composed at least of ZNF827, HNRNPK and the circular RNA circZNF827 that nucleates the complex on chromatin, may negatively regulate the transcription of genes involved in neuronal differentiation. Regulates alternative splicing of a core group of genes involved in neuronal differentiation, likely by mediating H3K36me3-coupled transcription elongation and co-transcriptional RNA processing via interaction with CHD8. In Rattus norvegicus (Rat), this protein is Heterogeneous nuclear ribonucleoprotein L.